A 668-amino-acid chain; its full sequence is UvrABC system protein B (668 aa).

The Helicase ATP-binding domain occupies 31–416 (QGITDGVPAQ…RGHIIEQIIR (386 aa)). 44-51 (GTTGSGKT) contacts ATP. The short motif at 97–120 (YYDYYQPEAYIARSDTYIEKSLLI) is the Beta-hairpin element. In terms of domain architecture, Helicase C-terminal spans 433 to 596 (QIDDLLEEIR…ITPQPIIKPI (164 aa)). Residues 621 to 656 (EASIKTYEEAMYQAAQEFQFDEAVKYRDLMNAAKKQ) enclose the UVR domain.

Belongs to the UvrB family. Forms a heterotetramer with UvrA during the search for lesions. Interacts with UvrC in an incision complex.

It is found in the cytoplasm. The UvrABC repair system catalyzes the recognition and processing of DNA lesions. A damage recognition complex composed of 2 UvrA and 2 UvrB subunits scans DNA for abnormalities. Upon binding of the UvrA(2)B(2) complex to a putative damaged site, the DNA wraps around one UvrB monomer. DNA wrap is dependent on ATP binding by UvrB and probably causes local melting of the DNA helix, facilitating insertion of UvrB beta-hairpin between the DNA strands. Then UvrB probes one DNA strand for the presence of a lesion. If a lesion is found the UvrA subunits dissociate and the UvrB-DNA preincision complex is formed. This complex is subsequently bound by UvrC and the second UvrB is released. If no lesion is found, the DNA wraps around the other UvrB subunit that will check the other stand for damage. In Chlamydia trachomatis serovar A (strain ATCC VR-571B / DSM 19440 / HAR-13), this protein is UvrABC system protein B.